Here is a 574-residue protein sequence, read N- to C-terminus: Arginine--tRNA ligase (574 aa).

Residues 126 to 136 (PNIAKRMHVGH) carry the 'HIGH' region motif.

It belongs to the class-I aminoacyl-tRNA synthetase family. As to quaternary structure, monomer.

It is found in the cytoplasm. It catalyses the reaction tRNA(Arg) + L-arginine + ATP = L-arginyl-tRNA(Arg) + AMP + diphosphate. This Chloroflexus aurantiacus (strain ATCC 29366 / DSM 635 / J-10-fl) protein is Arginine--tRNA ligase.